The following is a 255-amino-acid chain: Diphthine synthase (255 aa).

S-adenosyl-L-methionine is bound by residues L9, D85, V88, 113-114 (SI), L164, A207, and H232.

Belongs to the diphthine synthase family. In terms of assembly, homodimer.

It catalyses the reaction 2-[(3S)-amino-3-carboxypropyl]-L-histidyl-[translation elongation factor 2] + 3 S-adenosyl-L-methionine = diphthine-[translation elongation factor 2] + 3 S-adenosyl-L-homocysteine + 3 H(+). It functions in the pathway protein modification; peptidyl-diphthamide biosynthesis. In terms of biological role, S-adenosyl-L-methionine-dependent methyltransferase that catalyzes the trimethylation of the amino group of the modified target histidine residue in translation elongation factor 2 (EF-2), to form an intermediate called diphthine. The three successive methylation reactions represent the second step of diphthamide biosynthesis. This Methanococcus vannielii (strain ATCC 35089 / DSM 1224 / JCM 13029 / OCM 148 / SB) protein is Diphthine synthase.